The primary structure comprises 368 residues: H-2 class I histocompatibility antigen, D-P alpha chain (368 aa).

The signal sequence occupies residues 1–21 (MAPRTLLLLLAAALAPTQTRA). Positions 22 to 111 (GPHSLRYFVT…LLGYYNQSKG (90 aa)) are alpha-1. Over 22 to 303 (GPHSLRYFVT…RWEPPPSTDS (282 aa)) the chain is Extracellular. Asparagine 107 is a glycosylation site (N-linked (GlcNAc...) asparagine). Residues 112–203 (GSHTIQGMRG…ELGNATLLCT (92 aa)) form an alpha-2 region. A disulfide bridge connects residues cysteine 122 and cysteine 185. Residues asparagine 197 and asparagine 277 are each glycosylated (N-linked (GlcNAc...) asparagine). The interval 204–295 (DPPKAHVTHH…GLPEPLTLRW (92 aa)) is alpha-3. The Ig-like C1-type domain occupies 206–294 (PKAHVTHHPR…EGLPEPLTLR (89 aa)). Cysteines 224 and 280 form a disulfide. The segment at 296-303 (EPPPSTDS) is connecting peptide. Residues 304 to 330 (YMVIVAVLVVLGAVFIIGAVVAFVMMM) form a helical membrane-spanning segment. Residues 331-368 (RRNTGGKGGDYTLAPGSQSSEMSLRDCKVMVHDSHSLA) are Cytoplasmic-facing. A phosphoserine mark is found at serine 350 and serine 353.

Belongs to the MHC class I family. As to quaternary structure, heterodimer of an alpha chain and a beta chain (beta-2-microglobulin).

The protein resides in the membrane. Its function is as follows. Involved in the presentation of foreign antigens to the immune system. This is H-2 class I histocompatibility antigen, D-P alpha chain (H2-D1) from Mus musculus (Mouse).